Reading from the N-terminus, the 373-residue chain is Probable G-protein coupled receptor 173 (373 aa).

At 1 to 26 (MANTTGEPEEVSGALSPPSASAYVKL) the chain is on the extracellular side. Asn3 is a glycosylation site (N-linked (GlcNAc...) asparagine). Residues 27-47 (VLLGLIMCVSLAGNAILSLLV) traverse the membrane as a helical segment. The Cytoplasmic segment spans residues 48–59 (LKERALHKAPYY). Residues 60-80 (FLLDLCLADGIRSAVCFPFVL) traverse the membrane as a helical segment. At 81–97 (ASVRHGSSWTFSALSCK) the chain is on the extracellular side. A disulfide bond links Cys96 and Cys174. The helical transmembrane segment at 98–118 (IVAFMAVLFCFHAAFMLFCIS) threads the bilayer. The Cytoplasmic segment spans residues 119–139 (VTRYMAIAHHRFYAKRMTLWT). The helical transmembrane segment at 140-160 (CAAVICMAWTLSVAMAFPPVF) threads the bilayer. Residues 161-188 (DVGTYKFIREEDQCIFEHRYFKANDTLG) are Extracellular-facing. The N-linked (GlcNAc...) asparagine glycan is linked to Asn184. The helical transmembrane segment at 189-209 (FMLMLAVLMAATHAVYGKLLL) threads the bilayer. Residues 210 to 287 (FEYRHRKMKP…VKGEKQLGRM (78 aa)) lie on the Cytoplasmic side of the membrane. The helical transmembrane segment at 288–308 (FYAITLLFLLLWSPYIVACYW) threads the bilayer. Residues 309–322 (RVFVKACAVPHRYL) lie on the Extracellular side of the membrane. Residues 323 to 343 (ATAVWMSFAQAAVNPIVCFLL) traverse the membrane as a helical segment. Residues 344–373 (NKDLKKCLRTHAPCWGTGGAPAPREPYCVM) lie on the Cytoplasmic side of the membrane.

The protein belongs to the G-protein coupled receptor 1 family. Expressed in the ovary, specifically in granulosa cells of follicles that have passed the primary stage and in oocytes (at protein level). Expressed at high levels in brain. Lower levels in small intestine. In brain regions, detected in all regions tested. Highest levels in the cerebellum and cerebral cortex.

The protein localises to the cell membrane. Is a receptor for the SMIM20 derived peptides Phoenixin-14 and Phoenixin-20. It mediates the Phoenixin-14 and Phoenixin-20 augmentation of gonadotropin-releasing hormone (GNRH) signaling in the hypothalamus and pituitary gland. In the ovary, it mediates the effects of Phoenixin-14 and Phoenixin-20 induced granulosa cell proliferation during follicular growth. The protein is Probable G-protein coupled receptor 173 (GPR173) of Homo sapiens (Human).